The primary structure comprises 706 residues: G2/M phase-specific E3 ubiquitin-protein ligase (706 aa).

The C2HC pre-PHD-type zinc-finger motif lies at 11–51; sequence NLACVFCRKHDDCPNKYGEKKTKEKWNLTVHYYCLLMSSGI. The PHD-type 1 zinc finger occupies 79–128; that stretch reads LKCCVCKKNGASIGCVAPRCKRSYHFPCGLQRECIFQFTGNFASFCWDHR. A PHD-type 2; degenerate zinc finger spans residues 143–193; it reads PCTICLEFIEPIPSYNILRSPCCKNAWFHRDCLQVQAINAGVFFFRCTICN. The PHD-type 3 zinc finger occupies 237–286; it reads RCRCKEGRDYNAPDSKWEIKRCQCCGSSGTHLACSSLRSWEQNWECLECR. Residues 371–698 enclose the HECT domain; that stretch reads IWNSALDAFR…IRNTLRLEKE (328 aa).

Predominantly expressed in brain, liver, kidney, testes and ovary.

The protein localises to the nucleus. Its subcellular location is the nucleolus. It localises to the cytoplasm. It carries out the reaction S-ubiquitinyl-[E2 ubiquitin-conjugating enzyme]-L-cysteine + [acceptor protein]-L-lysine = [E2 ubiquitin-conjugating enzyme]-L-cysteine + N(6)-ubiquitinyl-[acceptor protein]-L-lysine.. The protein operates within protein modification; protein ubiquitination. E3 ubiquitin-protein ligase which accepts ubiquitin from an E2 ubiquitin-conjugating enzyme in the form of a thioester and then directly transfers the ubiquitin to targeted substrates. Essential in early embryonic development to prevent apoptotic death. In Homo sapiens (Human), this protein is G2/M phase-specific E3 ubiquitin-protein ligase (G2E3).